Consider the following 717-residue polypeptide: Cleavage stimulation factor subunit 3 (717 aa).

Position 2 is an N-acetylserine (Ser-2). HAT repeat units lie at residues 45 to 77 (QPID…AEIK), 79 to 110 (KNYD…YVRE), 117 to 152 (SYKE…FLKG), 163 to 196 (QRIT…YEEG), 221 to 261 (KEYE…WEKS), 271 to 303 (LITK…YLEQ), 319 to 352 (LFSD…YEES), 354 to 387 (MKYE…FARR), and 458 to 494 (NEDN…FESN). Residues 684–705 (VKRPNEDSDEDEEKGAVVPPVH) are disordered. Ser-691 carries the post-translational modification Phosphoserine.

Homodimer. The CSTF complex is composed of CSTF1 (50 kDa subunit), CSTF2 (64 kDa subunit) and CSTF3 (77 kDa subunit). CSTF3 directly interacts with CSTF1 and CSTF2. Interacts with FIP1L1.

The protein localises to the nucleus. Its function is as follows. One of the multiple factors required for polyadenylation and 3'-end cleavage of mammalian pre-mRNAs. The sequence is that of Cleavage stimulation factor subunit 3 (CSTF3) from Pongo abelii (Sumatran orangutan).